Here is a 150-residue protein sequence, read N- to C-terminus: Ribonuclease H (150 aa).

The region spanning 2-143 is the RNase H type-1 domain; it reads PAPILDIFVD…ADELANRAIE (142 aa). 4 residues coordinate Mg(2+): aspartate 11, glutamate 49, aspartate 71, and aspartate 135.

It belongs to the RNase H family. As to quaternary structure, monomer. The cofactor is Mg(2+).

Its subcellular location is the cytoplasm. The catalysed reaction is Endonucleolytic cleavage to 5'-phosphomonoester.. In terms of biological role, endonuclease that specifically degrades the RNA of RNA-DNA hybrids. This chain is Ribonuclease H, found in Dichelobacter nodosus (strain VCS1703A).